We begin with the raw amino-acid sequence, 292 residues long: Elongation factor Ts (292 aa).

Residues 80–83 (TDFV) are involved in Mg(2+) ion dislocation from EF-Tu.

Belongs to the EF-Ts family.

Its subcellular location is the cytoplasm. Functionally, associates with the EF-Tu.GDP complex and induces the exchange of GDP to GTP. It remains bound to the aminoacyl-tRNA.EF-Tu.GTP complex up to the GTP hydrolysis stage on the ribosome. In Mycoplasmopsis synoviae (strain 53) (Mycoplasma synoviae), this protein is Elongation factor Ts.